A 118-amino-acid polypeptide reads, in one-letter code: V-type proton ATPase subunit G 3 (118 aa).

The interval 1-34 is disordered; the sequence is MTSQSQGIHQLLQAEKRAKDKLEEAKKRKGKRLK. Residues 5–54 are a coiled coil; the sequence is SQGIHQLLQAEKRAKDKLEEAKKRKGKRLKQAKEEAMVEIDQYRMQRDKE. Positions 14-26 are enriched in basic and acidic residues; that stretch reads AEKRAKDKLEEAK.

The protein belongs to the V-ATPase G subunit family. As to quaternary structure, V-ATPase is a heteromultimeric enzyme made up of two complexes: the ATP-hydrolytic V1 complex and the proton translocation V0 complex. The V1 complex consists of three catalytic AB heterodimers that form a heterohexamer, three peripheral stalks each consisting of EG heterodimers, one central rotor including subunits D and F, and the regulatory subunits C and H. The proton translocation complex V0 consists of the proton transport subunit a, a ring of proteolipid subunits c9c'', rotary subunit d, subunits e and f, and the accessory subunits ATP6AP1/Ac45 and ATP6AP2/PRR. In terms of tissue distribution, kidney.

Its function is as follows. Subunit of the V1 complex of vacuolar(H+)-ATPase (V-ATPase), a multisubunit enzyme composed of a peripheral complex (V1) that hydrolyzes ATP and a membrane integral complex (V0) that translocates protons. V-ATPase is responsible for acidifying and maintaining the pH of intracellular compartments and in some cell types, is targeted to the plasma membrane, where it is responsible for acidifying the extracellular environment. This is V-type proton ATPase subunit G 3 (ATP6V1G3) from Homo sapiens (Human).